Here is an 82-residue protein sequence, read N- to C-terminus: Consomatin Ar1 (82 aa).

An N-terminal signal peptide occupies residues 1–22 (MQTAYWVVVMMMMVWVTAPVSE). Residues 23 to 60 (GGKLSDVIWGLVPDDLTPQIILQILNASRHAYRRVRPR) constitute a propeptide that is removed on maturation. Cysteines 64 and 69 form a disulfide. Trp-66 bears the D-tryptophan mark. 4-hydroxyproline is present on residues Pro-70, Pro-71, and Pro-73. A propeptide spanning residues 74-82 (QWIHPLVKR) is cleaved from the precursor.

The protein belongs to the conotoxin C superfamily. Consomatin family. As to expression, expressed by the venom duct.

It is found in the secreted. In terms of biological role, moderately activates human somatostatin receptors (SSTR) with a preferential activation of SSTR1 and SSTR4. In vivo, does not cause behavioral changes in mice within a few minutes of intracranial injection, but causes a progressive loss of movement thereafter. Four to five hours after injection, mice recover, even with the highest dose tested. Shows antinociception and antihyperalgesia activities in two mouse models of acute pain, most probably by acting outside the central nervous system. The protein is Consomatin Ar1 of Conus arenatus (Sand-dusted cone).